Consider the following 448-residue polypeptide: Methylenetetrahydrofolate--tRNA-(uracil-5-)-methyltransferase TrmFO (448 aa).

10-15 (GAGLAG) contributes to the FAD binding site.

This sequence belongs to the MnmG family. TrmFO subfamily. FAD serves as cofactor.

The protein localises to the cytoplasm. The catalysed reaction is uridine(54) in tRNA + (6R)-5,10-methylene-5,6,7,8-tetrahydrofolate + NADH + H(+) = 5-methyluridine(54) in tRNA + (6S)-5,6,7,8-tetrahydrofolate + NAD(+). It catalyses the reaction uridine(54) in tRNA + (6R)-5,10-methylene-5,6,7,8-tetrahydrofolate + NADPH + H(+) = 5-methyluridine(54) in tRNA + (6S)-5,6,7,8-tetrahydrofolate + NADP(+). In terms of biological role, catalyzes the folate-dependent formation of 5-methyl-uridine at position 54 (M-5-U54) in all tRNAs. This is Methylenetetrahydrofolate--tRNA-(uracil-5-)-methyltransferase TrmFO from Lactococcus lactis subsp. cremoris (strain SK11).